The sequence spans 253 residues: Imidazole glycerol phosphate synthase subunit HisF (253 aa).

Active-site residues include aspartate 11 and aspartate 130.

Belongs to the HisA/HisF family. In terms of assembly, heterodimer of HisH and HisF.

The protein localises to the cytoplasm. It catalyses the reaction 5-[(5-phospho-1-deoxy-D-ribulos-1-ylimino)methylamino]-1-(5-phospho-beta-D-ribosyl)imidazole-4-carboxamide + L-glutamine = D-erythro-1-(imidazol-4-yl)glycerol 3-phosphate + 5-amino-1-(5-phospho-beta-D-ribosyl)imidazole-4-carboxamide + L-glutamate + H(+). It participates in amino-acid biosynthesis; L-histidine biosynthesis; L-histidine from 5-phospho-alpha-D-ribose 1-diphosphate: step 5/9. In terms of biological role, IGPS catalyzes the conversion of PRFAR and glutamine to IGP, AICAR and glutamate. The HisF subunit catalyzes the cyclization activity that produces IGP and AICAR from PRFAR using the ammonia provided by the HisH subunit. The chain is Imidazole glycerol phosphate synthase subunit HisF from Clostridium beijerinckii (strain ATCC 51743 / NCIMB 8052) (Clostridium acetobutylicum).